A 983-amino-acid polypeptide reads, in one-letter code: Nuclear factor NF-kappa-B p105 subunit (983 aa).

One can recognise an RHD domain in the interval 47–372; sequence PYLQIIEQPK…EVQRKRQKLM (326 aa). Cys66 carries the S-nitrosocysteine modification. A Phosphoserine; by PKA modification is found at Ser342. A Nuclear localization signal motif is present at residues 365 to 370; it reads QRKRQK. The GRR stretch occupies residues 377 to 397; that stretch reads DGYGGGSGAGGGGMFGGGGGG. The segment at 423 to 454 is disordered; that stretch reads KSNAGMKHELSNSTVKKDEESSDKQSDKWDTK. Residues 428 to 454 are compositionally biased toward basic and acidic residues; the sequence is MKHELSNSTVKKDEESSDKQSDKWDTK. 7 ANK repeats span residues 540–569, 579–608, 612–641, 648–677, 682–712, 716–745, and 769–799; these read NGDN…DMNY, LYQT…NVNL, HGNS…ASSM, EGLS…DVNA, SGRT…DVDS, DGTT…DPHV, and PGTT…AVSE. Residues 804–891 enclose the Death domain; it reads QGPLRELNES…EAIEVIQKAL (88 aa). Residue Ser938 is modified to Phosphoserine.

In terms of assembly, active NF-kappa-B is a heterodimer of an about 50 kDa DNA-binding subunit and the weak DNA-binding subunit p65. Two heterodimers might form a labile tetramer. In terms of processing, generation of the NF-kappa-B p50 (Nuclear factor NF-kappa-B p50 subunit) transcription factor takes place both cotranslationally and post-translationally via non-mutually exclusive mechanisms. A cotranslational processing allows the production of both p50 and p105 (Nuclear factor NF-kappa-B p105 subunit) from a single NFKB1 mRNA. While translation occurs, the particular unfolded structure after the GRR repeat region acts as a substrate for the proteasome, promoting degradation of the C-terminus. The GRR acts as a proteasomal 'stop signal', protecting the region upstream of the GRR from degradation and promoting generation of p50. It is unclear if limited proteasome degradation during cotranslational processing depends on ubiquitination. NF-kappa-B p50 is also generated post-translationally following ubiquitination by the KPC complex, leading to limited processing by the proteasome downstream of the GRR region, thereby generating p50. Post-translationally, phosphorylation at the C-terminus by IKBKB/IKKB acts as a signal for ubiquitination and promotes either complete degradation or processing to generate the NF-kappa-B p50 (Nuclear factor NF-kappa-B p50 subunit). Phosphorylation at Ser-938 are required for BTRC/BTRCP-mediated ubiquitination and proteolysis. Phosphorylation at Ser-938 is also required for ubiquitination by the KPC complex and limited processing to generate NF-kappa-B p50 (Nuclear factor NF-kappa-B p50 subunit). Polyubiquitinated at multiple Lys residues in the C-terminus. Polyubiquitinated by the SCF(FBXW11) and SCF(BTRC) complexes following phosphorylation at Ser-938, leading to its complete degradation. In contrast, polyubiquitination by the KPC complex following phosphorylation at Ser-938 leads to limited proteosomal processing and generation of the active NF-kappa-B p50 (Nuclear factor NF-kappa-B p50 subunit). In terms of processing, S-nitrosylation of Cys-66 affects DNA binding. Post-translationally, the covalent modification of cysteine by 15-deoxy-Delta12,14-prostaglandin-J2 is autocatalytic and reversible. It may occur as an alternative to other cysteine modifications, such as S-nitrosylation and S-palmitoylation.

It is found in the cytoplasm. Its subcellular location is the nucleus. In terms of biological role, P105 is the precursor of the active p50 subunit (Nuclear factor NF-kappa-B p50 subunit) of the nuclear factor NF-kappa-B. The precursor protein itself does not bind to DNA. Acts as a cytoplasmic retention of attached NF-kappa-B proteins by p105. Its function is as follows. Constitutes the active form, which associates with RELA/p65 to form the NF-kappa-B p65-p50 complex to form a transcription factor. Together with RELA/p65, binds to the kappa-B consensus sequence 5'-GGRNNYYCC-3', located in the enhancer region of genes involved in immune response and acute phase reactions. The chain is Nuclear factor NF-kappa-B p105 subunit (NFKB1) from Gallus gallus (Chicken).